Here is a 128-residue protein sequence, read N- to C-terminus: Fluoride-specific ion channel FluC (128 aa).

4 consecutive transmembrane segments (helical) span residues 4 to 24 (LLLA…RYLI), 39 to 59 (GTLI…EFSM), 71 to 91 (FLTT…YETI), and 99 to 119 (ITLG…FVVI). Residues glycine 78 and threonine 81 each coordinate Na(+).

It belongs to the fluoride channel Fluc/FEX (TC 1.A.43) family.

The protein localises to the cell membrane. It catalyses the reaction fluoride(in) = fluoride(out). Na(+) is not transported, but it plays an essential structural role and its presence is essential for fluoride channel function. Fluoride-specific ion channel. Important for reducing fluoride concentration in the cell, thus reducing its toxicity. This Clostridium perfringens (strain ATCC 13124 / DSM 756 / JCM 1290 / NCIMB 6125 / NCTC 8237 / Type A) protein is Fluoride-specific ion channel FluC.